The primary structure comprises 801 residues: Cadherin-20 (801 aa).

Positions 1–34 are cleaved as a signal peptide; sequence MWTTGRMSNAKSWLGLGTSLYFWALMDLATTVLS. A propeptide spanning residues 35–59 is cleaved from the precursor; the sequence is STPMPEVELDTLFSGKPQSHQRSRR. Residues 60–619 are Extracellular-facing; it reads SWVWNQFFVL…AYMLPVSLSR (560 aa). 5 Cadherin domains span residues 61-165, 166-274, 275-389, 390-494, and 494-610; these read WVWN…EPKF, LDGP…PPRF, PQKH…PPVF, EPRF…APEF, and FPRF…SPEA. N261 is a glycosylation site (N-linked (GlcNAc...) asparagine). N420, N461, and N542 each carry an N-linked (GlcNAc...) asparagine glycan. Residues 620–640 form a helical membrane-spanning segment; sequence GALIAILACVFVLLVLVLLIL. Residues 641–801 are Cytoplasmic-facing; it reads SMRRHRKQPY…GASEGPSPLW (161 aa).

The protein localises to the cell membrane. Cadherins are calcium-dependent cell adhesion proteins. They preferentially interact with themselves in a homophilic manner in connecting cells; cadherins may thus contribute to the sorting of heterogeneous cell types. The chain is Cadherin-20 (Cdh20) from Rattus norvegicus (Rat).